A 231-amino-acid polypeptide reads, in one-letter code: NADH-ubiquinone oxidoreductase chain 4 (231 aa).

Transmembrane regions (helical) follow at residues 1–21, 34–54, 61–80, 84–106, 118–138, and 169–189; these read PIAG…YGII, VFLP…LTCL, SLIA…AIMI, WGLS…LFCL, ILIL…WWLL, and TIIL…HMFL.

The protein belongs to the complex I subunit 4 family.

The protein resides in the mitochondrion membrane. It catalyses the reaction a ubiquinone + NADH + 5 H(+)(in) = a ubiquinol + NAD(+) + 4 H(+)(out). In terms of biological role, core subunit of the mitochondrial membrane respiratory chain NADH dehydrogenase (Complex I) that is believed to belong to the minimal assembly required for catalysis. Complex I functions in the transfer of electrons from NADH to the respiratory chain. The immediate electron acceptor for the enzyme is believed to be ubiquinone. The sequence is that of NADH-ubiquinone oxidoreductase chain 4 (MT-ND4) from Porthidium nasutum (Hognosed pitviper).